The following is a 329-amino-acid chain: SLAM family member 5 (329 aa).

A signal peptide spans Met-1 to Gly-21. Over Lys-22 to Val-221 the chain is Extracellular. The 104-residue stretch at Pro-26–Leu-129 folds into the Ig-like V-type domain. In terms of domain architecture, Ig-like C2-type spans Pro-132–Gln-206. Asn-147 carries an N-linked (GlcNAc...) asparagine glycan. Cys-152 and Cys-190 are joined by a disulfide. The chain crosses the membrane as a helical span at residues Leu-222–Phe-242. Residues Arg-243–Val-329 are Cytoplasmic-facing. The short motif at Thr-263–Val-268 is the ITSM 1 element. Tyr-265 bears the Phosphotyrosine mark. Position 280 is a phosphotyrosine; by LYN (Tyr-280). The ITSM 2 signature appears at Thr-298–Val-303. Tyr-300 bears the Phosphotyrosine mark.

As to quaternary structure, homodimer; via its extracellular domain. Forms a head to tail dimer with a CD48 molecule from another cell. Interacts with SH2 domain-containing proteins SH2D1A/SAP and SH2D1B/EAT-2. Interacts with tyrosine-protein phosphatases PTPN6/SHP-1 and PTPN11/SHP-2 via its phosphorylated cytoplasmic domain, and this interaction is blocked by SH2D1A. Phosphorylated by tyrosine-protein kinase LCK on tyrosine residues following ligation induced by agonist monoclonal antibody. The association with SH2D1A/SAP is dependent of tyrosine phosphorylation of its cytoplasmic domain. Phosphorylated on Tyr-280 and Tyr-300 following platelet aggregation. Phosphorylated on tyrosine residues upon high affinity immunoglobulin epsilon receptor aggregation in mast cells. Post-translationally, N-glycosylated. As to expression, predominantly expressed in hematopoietic tissues such as lymph node, spleen, thymus, and bone marrow. Detected also in lung.

The protein resides in the cell membrane. In terms of biological role, self-ligand receptor of the signaling lymphocytic activation molecule (SLAM) family. SLAM receptors triggered by homo- or heterotypic cell-cell interactions are modulating the activation and differentiation of a wide variety of immune cells and thus are involved in the regulation and interconnection of both innate and adaptive immune response. Activities are controlled by presence or absence of small cytoplasmic adapter proteins, SH2D1A/SAP and/or SH2D1B/EAT-2. Can mediate natural killer (NK) cell cytotoxicity dependent on SH2D1A and SH2D1B. Increases proliferative responses of activated T-cells and SH2D1A/SAP does not seen be required for this process. Homophilic interactions enhance interferon gamma/IFNG secretion in lymphocytes and induce platelet stimulation via a SH2D1A/SAP-dependent pathway. May serve as a marker for hematopoietic progenitor cells. Required for a prolonged T-cell:B-cell contact, optimal T follicular helper function, and germinal center formation. In germinal centers involved in maintaining B cell tolerance and in preventing autoimmunity. In mast cells negatively regulates high affinity immunoglobulin epsilon receptor signaling; independent of SH2D1A and SH2D1B but implicating FES and PTPN6/SHP-1. In macrophages enhances LPS-induced MAPK phosphorylation and NF-kappaB activation and modulates LPS-induced cytokine secretion; involving ITSM 2. Positively regulates macroautophagy in primary dendritic cells via stabilization of IRF8; inhibits TRIM21-mediated proteasomal degradation of IRF8. In Mus musculus (Mouse), this protein is SLAM family member 5 (Cd84).